We begin with the raw amino-acid sequence, 274 residues long: Elongation factor Ts (274 aa).

The interval 82 to 85 (TDFV) is involved in Mg(2+) ion dislocation from EF-Tu.

The protein belongs to the EF-Ts family.

The protein localises to the cytoplasm. In terms of biological role, associates with the EF-Tu.GDP complex and induces the exchange of GDP to GTP. It remains bound to the aminoacyl-tRNA.EF-Tu.GTP complex up to the GTP hydrolysis stage on the ribosome. The polypeptide is Elongation factor Ts (Christiangramia forsetii (strain DSM 17595 / CGMCC 1.15422 / KT0803) (Gramella forsetii)).